A 287-amino-acid chain; its full sequence is Succinate--CoA ligase [ADP-forming] subunit alpha 2 (287 aa).

CoA is bound by residues 17–20 (TGYQ), K43, and 96–98 (ITE). Position 159 (Y159) interacts with substrate. The active-site Tele-phosphohistidine intermediate is H246.

This sequence belongs to the succinate/malate CoA ligase alpha subunit family. In terms of assembly, heterotetramer of two alpha and two beta subunits.

The enzyme catalyses succinate + ATP + CoA = succinyl-CoA + ADP + phosphate. The catalysed reaction is GTP + succinate + CoA = succinyl-CoA + GDP + phosphate. It participates in carbohydrate metabolism; tricarboxylic acid cycle; succinate from succinyl-CoA (ligase route): step 1/1. Functionally, succinyl-CoA synthetase functions in the citric acid cycle (TCA), coupling the hydrolysis of succinyl-CoA to the synthesis of either ATP or GTP and thus represents the only step of substrate-level phosphorylation in the TCA. The alpha subunit of the enzyme binds the substrates coenzyme A and phosphate, while succinate binding and nucleotide specificity is provided by the beta subunit. In Archaeoglobus fulgidus (strain ATCC 49558 / DSM 4304 / JCM 9628 / NBRC 100126 / VC-16), this protein is Succinate--CoA ligase [ADP-forming] subunit alpha 2.